We begin with the raw amino-acid sequence, 545 residues long: Methionine--tRNA ligase (545 aa).

The 'HIGH' region signature appears at 13–23; it reads PYANGPLHIGH. C144, C147, C157, and C160 together coordinate Zn(2+). The 'KMSKS' region signature appears at 330 to 334; that stretch reads KISKS. An ATP-binding site is contributed by K333.

This sequence belongs to the class-I aminoacyl-tRNA synthetase family. MetG type 1 subfamily. Monomer. Zn(2+) serves as cofactor.

It is found in the cytoplasm. The catalysed reaction is tRNA(Met) + L-methionine + ATP = L-methionyl-tRNA(Met) + AMP + diphosphate. Its function is as follows. Is required not only for elongation of protein synthesis but also for the initiation of all mRNA translation through initiator tRNA(fMet) aminoacylation. The chain is Methionine--tRNA ligase from Blochmanniella floridana.